The chain runs to 1883 residues: Zinc finger protein 106 (1883 aa).

Residues isoleucine 6 and lysine 37 each participate in a glycyl lysine isopeptide (Lys-Gly) (interchain with G-Cter in SUMO2) cross-link. A C2H2-type 1; atypical zinc finger spans residues 20–44 (HECRVCGVTEVGLSAYAKHISGQLH). Positions 39-162 (ISGQLHKDNV…NGGGPRGRSG (124 aa)) are disordered. Residues 52–67 (EREDDGKGEEEEEDYF) show a composition bias toward acidic residues. Glycyl lysine isopeptide (Lys-Gly) (interchain with G-Cter in SUMO2) cross-links involve residues lysine 69 and lysine 76. Composition is skewed to basic and acidic residues over residues 77-86 (QRKEQSRQDE), 96-116 (SDDR…DRES), and 128-138 (PQRDWKWEKDG). Residue lysine 133 forms a Glycyl lysine isopeptide (Lys-Gly) (interchain with G-Cter in SUMO2) linkage. Positions 139 to 148 (FNNTRKNSFP) are enriched in polar residues. Glycyl lysine isopeptide (Lys-Gly) (interchain with G-Cter in SUMO2) cross-links involve residues lysine 243, lysine 287, and lysine 305. The span at 322-338 (QTTKQADTATSKVSGKN) shows a compositional bias: polar residues. The segment at 322 to 356 (QTTKQADTATSKVSGKNGSAAREKPRRWTPYPSQK) is disordered. Glycyl lysine isopeptide (Lys-Gly) (interchain with G-Cter in SUMO2) cross-links involve residues lysine 356, lysine 365, lysine 371, and lysine 417. Positions 389 to 423 (IQEPQTDETRNSPTQKTQKEIHTGSLNHKASSDSA) are disordered. Residues 412–423 (GSLNHKASSDSA) are compositionally biased toward polar residues. Serine 422 is modified (phosphoserine). Glycyl lysine isopeptide (Lys-Gly) (interchain with G-Cter in SUMO2) cross-links involve residues lysine 451, lysine 461, lysine 477, lysine 492, lysine 505, lysine 515, lysine 525, lysine 539, and lysine 557. A disordered region spans residues 457–501 (CPATKSLSQKQDPKNISKNTKTNFFSPGEHSNPSNKPTVEDNHGP). Residues 461–493 (KSLSQKQDPKNISKNTKTNFFSPGEHSNPSNKP) are compositionally biased toward polar residues. The interval 586 to 637 (LEDESDGETSDTEKHGTKIGTLGSATTELLSGSTRTADEKEEDDRILKTSRE) is disordered. A Phosphoserine modification is found at serine 590. A Glycyl lysine isopeptide (Lys-Gly) (interchain with G-Cter in SUMO2) cross-link involves residue lysine 603. Polar residues predominate over residues 608 to 620 (GSATTELLSGSTR). 2 positions are modified to phosphoserine: serine 641 and serine 661. Glycyl lysine isopeptide (Lys-Gly) (interchain with G-Cter in SUMO2) cross-links involve residues lysine 671, lysine 684, lysine 705, lysine 721, lysine 741, lysine 775, and lysine 807. 4 positions are modified to phosphoserine: serine 859, serine 861, serine 864, and serine 893. The interval 879-945 (EEGTGKENEP…HSAQLSSDHI (67 aa)) is disordered. Polar residues predominate over residues 888–906 (PQQMVSPSNSLRAGQSQKA). Glycyl lysine isopeptide (Lys-Gly) (interchain with G-Cter in SUMO2) cross-links involve residues lysine 905 and lysine 911. Serine 937 carries the post-translational modification Phosphoserine. Lysine 953 is covalently cross-linked (Glycyl lysine isopeptide (Lys-Gly) (interchain with G-Cter in SUMO2)). The span at 958–976 (QERSIPPSENQNSQESNGE) shows a compositional bias: polar residues. 4 disordered regions span residues 958-982 (QERS…CLSS), 997-1048 (ATDS…KERS), 1121-1140 (EPSE…RRNS), and 1182-1218 (PTFQ…VPPS). Threonine 1021 carries the phosphothreonine modification. 3 positions are modified to phosphoserine: serine 1025, serine 1026, and serine 1031. Over residues 1035–1045 (KNKRRKIKGKK) the composition is skewed to basic residues. Serine 1249 carries the phosphoserine modification. The interval 1252–1483 (ESTESFHEPS…EVSSTSEIGT (232 aa)) is disordered. Positions 1255–1277 (ESFHEPSQELKFSVEQRNTRNRE) are enriched in basic and acidic residues. Lysine 1265 is covalently cross-linked (Glycyl lysine isopeptide (Lys-Gly) (interchain with G-Cter in SUMO2)). Polar residues-rich tracts occupy residues 1278–1291 (NSPS…SSIN) and 1299–1312 (KGNS…SSFL). A phosphoserine mark is found at serine 1279, serine 1281, and serine 1284. Lysine 1299 is covalently cross-linked (Glycyl lysine isopeptide (Lys-Gly) (interchain with G-Cter in SUMO2)). Position 1302 is a phosphoserine (serine 1302). Lysine 1324 is covalently cross-linked (Glycyl lysine isopeptide (Lys-Gly) (interchain with G-Cter in SUMO2)). A Phosphoserine modification is found at serine 1328. Polar residues predominate over residues 1333 to 1346 (PEQQAESTLTSAET). Basic residues predominate over residues 1349–1362 (SKKKKKLRKKKSLR). A Phosphoserine modification is found at serine 1370. The residue at position 1372 (threonine 1372) is a Phosphothreonine. Residues lysine 1380, lysine 1392, and lysine 1395 each participate in a glycyl lysine isopeptide (Lys-Gly) (interchain with G-Cter in SUMO2) cross-link. Composition is skewed to basic and acidic residues over residues 1402–1416 (EDSR…VRDE) and 1444–1456 (GEEK…KKDI). Residue lysine 1454 forms a Glycyl lysine isopeptide (Lys-Gly) (interchain with G-Cter in SUMO2) linkage. Residues 1457-1481 (WNSTEQNPLETSRSGCDEVSSTSEI) are compositionally biased toward polar residues. Serine 1468 carries the phosphoserine modification. Residues lysine 1486 and lysine 1504 each participate in a glycyl lysine isopeptide (Lys-Gly) (interchain with G-Cter in SUMO2) cross-link. The span at 1502–1513 (SIKGSKNSSEIS) shows a compositional bias: polar residues. The interval 1502–1527 (SIKGSKNSSEISSEPGDDDEPTEGSF) is disordered. WD repeat units lie at residues 1529-1568 (GHQA…GVFE), 1570-1611 (HTSK…CVEQ), 1654-1695 (HGPR…LLRT), 1698-1737 (GHSK…RIYK), 1738-1775 (GHNH…RLQV), and 1778-1815 (GHKD…NYRC). Residue lysine 1585 forms a Glycyl lysine isopeptide (Lys-Gly) (interchain with G-Cter in SUMO2) linkage. Lysine 1737 participates in a covalent cross-link: Glycyl lysine isopeptide (Lys-Gly) (interchain with G-Cter in SUMO2). The C2H2-type 2; atypical zinc finger occupies 1813–1838 (YRCWWHGCSLIFGVVDHLKQHLLTDH). Lysine 1864 participates in a covalent cross-link: Glycyl lysine isopeptide (Lys-Gly) (interchain with G-Cter in SUMO2).

Interacts with KNOP1. Interacts with TARDBP and NUP107. Interacts (via N-terminus) with RBM39. Interacts with the SH3 domains of FYN and GRB2. In terms of processing, phosphorylated by FYN in vitro.

It localises to the nucleus. The protein localises to the nucleolus. Its subcellular location is the nucleus speckle. In terms of biological role, RNA-binding protein. Specifically binds to 5'-GGGGCC-3' sequence repeats in RNA. Essential for maintenance of peripheral motor neuron and skeletal muscle function. Required for normal expression and/or alternative splicing of a number of genes in spinal cord and skeletal muscle, including the neurite outgrowth inhibitor RTN4. Also contributes to normal mitochondrial respiratory function in motor neurons, via an unknown mechanism. The polypeptide is Zinc finger protein 106 (ZNF106) (Homo sapiens (Human)).